The primary structure comprises 551 residues: Probable terminase, large subunit gp28 (551 aa).

The protein belongs to the T4likevirus large terminase family. In terms of assembly, interacts with the terminase small subunit gp28. Mg(2+) serves as cofactor.

Its subcellular location is the host cytoplasm. Its function is as follows. The terminase large subunit acts as an ATP driven molecular motor necessary for viral DNA translocation into empty capsids and as an endonuclease that cuts the viral genome to initiate and to end a packaging reaction. The terminase lies at a unique vertex of the procapsid and is composed of two subunits, a small terminase subunit involved in viral DNA recognition (packaging sequence), and a large terminase subunit possessing endonucleolytic and ATPase activities. Both terminase subunits heterooligomerize and are docked on the portal protein to form the packaging machine. The terminase large subunit exhibits endonuclease activity and cleaves the viral genome concatemer once the capsid is full (headful packaging). Once the capsid is packaged with the DNA, the terminase complex is substituted by neck proteins. This chain is Probable terminase, large subunit gp28, found in Escherichia phage Mu (Bacteriophage Mu).